The primary structure comprises 496 residues: 1-aminocyclopropane-1-carboxylate synthase 4 (496 aa).

N6-(pyridoxal phosphate)lysine is present on lysine 300.

This sequence belongs to the class-I pyridoxal-phosphate-dependent aminotransferase family. It depends on pyridoxal 5'-phosphate as a cofactor. Expressed in leaves. Expressed in shoots and leaf blades. Expressed at low levels in leaf sheaths.

The enzyme catalyses S-adenosyl-L-methionine = 1-aminocyclopropane-1-carboxylate + S-methyl-5'-thioadenosine + H(+). The protein operates within alkene biosynthesis; ethylene biosynthesis via S-adenosyl-L-methionine; ethylene from S-adenosyl-L-methionine: step 1/2. Catalyzes the formation of 1-aminocyclopropane-1-carboxylate, a direct precursor of ethylene in higher plants. The chain is 1-aminocyclopropane-1-carboxylate synthase 4 from Oryza sativa subsp. japonica (Rice).